A 330-amino-acid polypeptide reads, in one-letter code: D-alanine--D-alanine ligase (330 aa).

One can recognise an ATP-grasp domain in the interval 122-323 (NRFLSGFGIR…MKEVLCTIIR (202 aa)). 151 to 206 (IARMGLPLFVKPNVGGSSIATTKVVEAAQLLPAIEQAFSEGEEVMIERLICGTEVT) is a binding site for ATP. 3 residues coordinate Mg(2+): D277, E290, and N292.

It belongs to the D-alanine--D-alanine ligase family. Mg(2+) is required as a cofactor. Requires Mn(2+) as cofactor.

It localises to the cytoplasm. The enzyme catalyses 2 D-alanine + ATP = D-alanyl-D-alanine + ADP + phosphate + H(+). It participates in cell wall biogenesis; peptidoglycan biosynthesis. Its function is as follows. Cell wall formation. This chain is D-alanine--D-alanine ligase, found in Porphyromonas gingivalis (strain ATCC BAA-308 / W83).